Reading from the N-terminus, the 159-residue chain is Cyclic pyranopterin monophosphate synthase (159 aa).

Substrate-binding positions include 76–78 (LCH) and 114–115 (ME). Aspartate 129 is a catalytic residue.

It belongs to the MoaC family. As to quaternary structure, homohexamer; trimer of dimers.

The catalysed reaction is (8S)-3',8-cyclo-7,8-dihydroguanosine 5'-triphosphate = cyclic pyranopterin phosphate + diphosphate. The protein operates within cofactor biosynthesis; molybdopterin biosynthesis. Catalyzes the conversion of (8S)-3',8-cyclo-7,8-dihydroguanosine 5'-triphosphate to cyclic pyranopterin monophosphate (cPMP). This is Cyclic pyranopterin monophosphate synthase from Clostridium botulinum (strain Alaska E43 / Type E3).